A 449-amino-acid chain; its full sequence is Elongation factor 1-alpha 1 (449 aa).

The tr-type G domain occupies 5–230 (KVHMNLVVVG…DMLEPPVRPS (226 aa)). Residues 14–21 (GHVDAGKS) form a G1 region. Position 14–21 (14–21 (GHVDAGKS)) interacts with GTP. A G2 region spans residues 70-74 (GITID). The tract at residues 91–94 (DAPG) is G3. GTP is bound by residues 91–95 (DAPGH) and 153–156 (NKMD). The tract at residues 153 to 156 (NKMD) is G4. The segment at 194–196 (SGW) is G5. Residue glutamate 362 is modified to 5-glutamyl glycerylphosphorylethanolamine.

Belongs to the TRAFAC class translation factor GTPase superfamily. Classic translation factor GTPase family. EF-Tu/EF-1A subfamily. Phosphatidylethanolamine (PE) is a direct precursor of the ethanolamine-phosphoglycerol (EPG) moiety.

The protein resides in the cytoplasm. Its function is as follows. This protein promotes the GTP-dependent binding of aminoacyl-tRNA to the A-site of ribosomes during protein biosynthesis. The protein is Elongation factor 1-alpha 1 (TEF1) of Trypanosoma brucei brucei (strain 927/4 GUTat10.1).